A 562-amino-acid chain; its full sequence is Eukaryotic translation initiation factor 3 subunit L (562 aa).

The PCI domain maps to 329–535; the sequence is DAIRVFANIL…IHIADTKVAR (207 aa).

This sequence belongs to the eIF-3 subunit L family. As to quaternary structure, component of the eukaryotic translation initiation factor 3 (eIF-3) complex, which is composed of 13 subunits: eif3a, eif3b, eif3c, eif3d, eif3e, eif3f, eif3g, eif3h, eif3i, eif3j, eif3k, eif3l and eif3m.

The protein resides in the cytoplasm. Functionally, component of the eukaryotic translation initiation factor 3 (eIF-3) complex, which is involved in protein synthesis of a specialized repertoire of mRNAs and, together with other initiation factors, stimulates binding of mRNA and methionyl-tRNAi to the 40S ribosome. The eIF-3 complex specifically targets and initiates translation of a subset of mRNAs involved in cell proliferation. This chain is Eukaryotic translation initiation factor 3 subunit L (eif3l), found in Xenopus tropicalis (Western clawed frog).